We begin with the raw amino-acid sequence, 446 residues long: DNA repair protein RadA (446 aa).

The segment at 10–27 (CQACGNQQSKWLGKCPDC) adopts a C4-type zinc-finger fold. 96–103 (GSPGVGKS) contributes to the ATP binding site. The RadA KNRFG motif motif lies at 253–257 (KNRFG). The segment at 349–446 (DVFVNISGGV…KELSQVLEWM (98 aa)) is lon-protease-like.

The protein belongs to the RecA family. RadA subfamily.

In terms of biological role, DNA-dependent ATPase involved in processing of recombination intermediates, plays a role in repairing DNA breaks. Stimulates the branch migration of RecA-mediated strand transfer reactions, allowing the 3' invading strand to extend heteroduplex DNA faster. Binds ssDNA in the presence of ADP but not other nucleotides, has ATPase activity that is stimulated by ssDNA and various branched DNA structures, but inhibited by SSB. Does not have RecA's homology-searching function. This chain is DNA repair protein RadA, found in Campylobacter jejuni subsp. jejuni serotype O:2 (strain ATCC 700819 / NCTC 11168).